The following is a 333-amino-acid chain: Alpha-N-acetylgalactosaminide alpha-2,6-sialyltransferase 6 (333 aa).

Polar residues predominate over residues 1–12 (MACSRPPSQCEP). Positions 1 to 26 (MACSRPPSQCEPTSLPPGPPAGRRHL) are disordered. The Cytoplasmic portion of the chain corresponds to 1–43 (MACSRPPSQCEPTSLPPGPPAGRRHLPLSRRRREMSSNKEQRS). Residues 44–64 (AVFVILFALITILILYSSNSA) traverse the membrane as a helical; Signal-anchor for type II membrane protein segment. Over 65 to 333 (NEVFHYGSLR…GITFSHPSWT (269 aa)) the chain is Lumenal. Asn98 is a glycosylation site (N-linked (GlcNAc...) asparagine). Cys108 and Cys256 are oxidised to a cystine.

This sequence belongs to the glycosyltransferase 29 family. Expressed in kidney, in proximal tubule epithelial cells. Expressed in colon cell lines.

It is found in the golgi apparatus membrane. It carries out the reaction a ganglioside GM1b (d18:1(4E)) + CMP-N-acetyl-beta-neuraminate = a ganglioside GD1alpha (d18:1(4E)) + CMP + H(+). The enzyme catalyses N-acetyl-alpha-neuraminosyl-(2-&gt;3)-beta-D-galactosyl-(1-&gt;3)-N-acetyl-beta-D-glucosaminyl-(1-&gt;3)-beta-D-galactosyl-(1-&gt;4)-beta-D-glucosyl-(1&lt;-&gt;1')-N-acyl-sphing-4-enine + CMP-N-acetyl-beta-neuraminate = N-acetyl-alpha-neuraminosyl-(2-&gt;3)-beta-D-galactosyl-(1-&gt;3)-[N-acetyl-alpha-neuraminosyl-(2-&gt;6)]-N-acetyl-beta-D-glucosaminyl-(1-&gt;3)-beta-D-galactosyl-(1-&gt;4)-beta-D-glucosyl-(1&lt;-&gt;1')-N-acyl-sphing-4-enine + CMP + H(+). It catalyses the reaction a globoside MSGG + CMP-N-acetyl-beta-neuraminate = a globoside DSGG + CMP + H(+). The catalysed reaction is a ganglioside GD1a (d18:1(4E)) + CMP-N-acetyl-beta-neuraminate = a ganglioside GT1aalpha (d18:1(4E)) + CMP + H(+). It carries out the reaction a ganglioside GT1b (d18:1(4E)) + CMP-N-acetyl-beta-neuraminate = a ganglioside GQ1balpha (d18:1(4E)) + CMP + H(+). The enzyme catalyses 3-O-[alpha-Neu5Ac-(2-&gt;3)-beta-D-Gal-(1-&gt;3)-alpha-D-GalNAc]-L-Ser-[protein] + CMP-N-acetyl-beta-neuraminate = a 3-O-{alpha-Neu5Ac-(2-&gt;3)-beta-D-Gal-(1-&gt;3)-[alpha-Neu5Ac-(2-&gt;6)]-alpha-D-GalNAc}-L-seryl-[protein] + CMP + H(+). It catalyses the reaction 3-O-[alpha-Neu5Ac-(2-&gt;3)-beta-D-Gal-(1-&gt;3)-alpha-D-GalNAc]-L-Thr-[protein] + CMP-N-acetyl-beta-neuraminate = a 3-O-{alpha-Neu5Ac-(2-&gt;3)-beta-D-Gal-(1-&gt;3)-[alpha-Neu5Ac-(2-&gt;6)]-alpha-D-GalNAc}-L-threonyl-[protein] + CMP + H(+). Transfers the sialyl group (N-acetyl-alpha-neuraminyl or NeuAc) from CMP-NeuAc onto glycoproteins and glycolipids, forming an alpha-2,6-linkage. Produces branched type disialyl structures by transfer of a sialyl group onto the GalNAc or GlcNAc residue inside backbone core chains having a terminal sialic acid with an alpha-2,3-linkage on Gal. ST6GalNAcVI prefers glycolipids to glycoproteins, predominantly catalyzing the biosynthesis of ganglioside GD1alpha from GM1b. Besides GMb1, MSGG and other glycolipids, it shows activity towards sialyl Lc4Cer generating disialyl Lc4Cer, which can lead to the synthesis of disialyl Lewis a (Le(a)), suggested to be a cancer-associated antigen. Also has activity toward GD1a and GT1b, and can generate DSGG (disialylgalactosylgloboside) from MSGG (monosialylgalactosylgloboside). The chain is Alpha-N-acetylgalactosaminide alpha-2,6-sialyltransferase 6 (ST6GALNAC6) from Homo sapiens (Human).